A 420-amino-acid chain; its full sequence is Tyrosine--tRNA ligase (420 aa).

Tyr36 serves as a coordination point for L-tyrosine. The 'HIGH' region motif lies at 41–50 (PTADSMHIGH). Positions 170 and 174 each coordinate L-tyrosine. A 'KMSKS' region motif is present at residues 231–235 (KFGKS). Lys234 contributes to the ATP binding site. Residues 353–420 (TNIVDFIVEA…KKKYFMVKYK (68 aa)) enclose the S4 RNA-binding domain.

It belongs to the class-I aminoacyl-tRNA synthetase family. TyrS type 1 subfamily. In terms of assembly, homodimer.

It is found in the cytoplasm. The catalysed reaction is tRNA(Tyr) + L-tyrosine + ATP = L-tyrosyl-tRNA(Tyr) + AMP + diphosphate + H(+). Functionally, catalyzes the attachment of tyrosine to tRNA(Tyr) in a two-step reaction: tyrosine is first activated by ATP to form Tyr-AMP and then transferred to the acceptor end of tRNA(Tyr). The chain is Tyrosine--tRNA ligase from Staphylococcus carnosus (strain TM300).